We begin with the raw amino-acid sequence, 355 residues long: DNA-directed RNA polymerase subunit alpha (355 aa).

Residues 1 to 248 (MYYDDGIPVF…EQLQPFISSD (248 aa)) form an alpha N-terminal domain (alpha-NTD) region. The interval 267–355 (YDPILLRKVD…ELARQHTDED (89 aa)) is alpha C-terminal domain (alpha-CTD).

The protein belongs to the RNA polymerase alpha chain family. Homodimer. The RNAP catalytic core consists of 2 alpha, 1 beta, 1 beta' and 1 omega subunit. When a sigma factor is associated with the core the holoenzyme is formed, which can initiate transcription.

It catalyses the reaction RNA(n) + a ribonucleoside 5'-triphosphate = RNA(n+1) + diphosphate. Its function is as follows. DNA-dependent RNA polymerase catalyzes the transcription of DNA into RNA using the four ribonucleoside triphosphates as substrates. The protein is DNA-directed RNA polymerase subunit alpha of Wolbachia sp. subsp. Brugia malayi (strain TRS).